The following is a 418-amino-acid chain: 3-isopropylmalate dehydratase large subunit 1 (418 aa).

3 residues coordinate [4Fe-4S] cluster: Cys298, Cys358, and Cys361.

It belongs to the aconitase/IPM isomerase family. LeuC type 2 subfamily. In terms of assembly, heterodimer of LeuC and LeuD. It depends on [4Fe-4S] cluster as a cofactor.

The catalysed reaction is (2R,3S)-3-isopropylmalate = (2S)-2-isopropylmalate. It functions in the pathway amino-acid biosynthesis; L-leucine biosynthesis; L-leucine from 3-methyl-2-oxobutanoate: step 2/4. Its function is as follows. Catalyzes the isomerization between 2-isopropylmalate and 3-isopropylmalate, via the formation of 2-isopropylmaleate. The chain is 3-isopropylmalate dehydratase large subunit 1 from Thermotoga maritima (strain ATCC 43589 / DSM 3109 / JCM 10099 / NBRC 100826 / MSB8).